The chain runs to 99 residues: Gibberellin-regulated protein 2 (99 aa).

Residues 1 to 26 (MAVFRSTLVLLLIIVCLTTYELHVHA) form the signal peptide.

This sequence belongs to the GASA family. In terms of processing, six disulfide bonds may be present. In terms of tissue distribution, dry seeds and maturating siliques.

Its subcellular location is the secreted. Functionally, gibberellin-regulated protein that may function in hormonal controlled steps of development such as seed germination, flowering and seed maturation. The protein is Gibberellin-regulated protein 2 (GASA2) of Arabidopsis thaliana (Mouse-ear cress).